A 1277-amino-acid polypeptide reads, in one-letter code: NPC intracellular cholesterol transporter 1 (1277 aa).

An N-terminal signal peptide occupies residues 1–22 (MGAHHPALGLLLLLLCPAQVFS). Residues 23–269 (QSCVWYGECG…WRIWGLDAMY (247 aa)) lie on the Lumenal side of the membrane. 9 disulfides stabilise this stretch: Cys25–Cys74, Cys31–Cys42, Cys63–Cys109, Cys75–Cys113, Cys97–Cys238, Cys100–Cys160, Cys177–Cys184, Cys227–Cys243, and Cys240–Cys247. Asn41 contacts cholesterol. N-linked (GlcNAc...) asparagine glycosylation is present at Asn70. Gln79 provides a ligand contact to cholesterol. 2 N-linked (GlcNAc...) asparagine glycosylation sites follow: Asn122 and Asn137. The segment at 175–205 (LLCGRDARACNATNWIEYMFNKDNGQAPFTI) is important for cholesterol binding and cholesterol transfer from NPC1 to liposomes. N-linked (GlcNAc...) asparagine glycans are attached at residues Asn185, Asn222, and Asn228. Residues 270–290 (VIMWVTYVAFLFVFFGALLAV) traverse the membrane as a helical segment. Topologically, residues 291 to 350 (WCHRRRYFVSEYTPIDSNIAFSVNSSDKGEASCCDPLGAAFDDCLRRMFTKWGAFCVRNP) are cytoplasmic. The helical transmembrane segment at 351-371 (TCIIFFSLAFITVCSSGLVFV) threads the bilayer. Over 372–621 (QVTTNPVELW…ELNRESNSDV (250 aa)) the chain is Lumenal. N-linked (GlcNAc...) asparagine glycosylation is found at Asn414, Asn459, Asn478, and Asn524. 2 disulfide bridges follow: Cys468-Cys479 and Cys516-Cys533. An SSD domain is found at 620 to 785 (DVFTVIISYV…ITCFVSLLGL (166 aa)). A helical membrane pass occupies residues 622 to 642 (FTVIISYVVMFLYISLALGHI). Residues 643–653 (QSCSRLLVDSK) lie on the Cytoplasmic side of the membrane. Residues 654-674 (ISLGIAGILIVLSSVACSLGI) traverse the membrane as a helical segment. The Lumenal portion of the chain corresponds to 675–683 (FSYMGMPLT). Residues 684 to 704 (LIVIEVIPFLVLAVGVDNIFI) traverse the membrane as a helical segment. At 705–730 (LVQTYQRDERLQEETLDQQLGRILGE) the chain is on the cytoplasmic side. The chain crosses the membrane as a helical span at residues 731–751 (VAPTMFLSSFSETSAFFFGAL). Over 752-759 (SSMPAVHT) the chain is Lumenal. The chain crosses the membrane as a helical span at residues 760 to 780 (FSLFAGMAVLIDFLLQITCFV). Over 781 to 832 (SLLGLDIKRQEKNHLDILCCVRGADDGQGSHASESYLFRFFKNYFAPLLLKD) the chain is Cytoplasmic. Residues 833 to 853 (WLRPIVVAVFVGVLSFSVAVV) traverse the membrane as a helical segment. Topologically, residues 854-1097 (NKVDIGLDQS…EQYLTIIDDT (244 aa)) are lumenal. 2 N-linked (GlcNAc...) asparagine glycosylation sites follow: Asn868 and Asn898. Cys909 and Cys914 are joined by a disulfide. 4 N-linked (GlcNAc...) asparagine glycosylation sites follow: Asn916, Asn961, Asn968, and Asn1063. 3 disulfide bridges follow: Cys956-Cys1011, Cys957-Cys979, and Cys967-Cys976. A helical membrane pass occupies residues 1098–1118 (IFNLSVSLGSIFLVTLVVLGC). The Cytoplasmic segment spans residues 1119–1123 (ELWSA). A helical membrane pass occupies residues 1124–1144 (VIMCITIAMILVNMFGVMWLW). Residue Gly1145 is a topological domain, lumenal. The chain crosses the membrane as a helical span at residues 1146 to 1166 (ISLNAVSLVNLVMSCGISVEF). Topologically, residues 1167–1194 (CSHITRAFTMSTKGSRVSRAEEALAHMG) are cytoplasmic. A helical transmembrane segment spans residues 1195–1215 (SSVFSGITLTKFGGIVVLAFA). At 1216 to 1226 (KSQIFEIFYFR) the chain is on the lumenal side. A helical membrane pass occupies residues 1227–1247 (MYLAMVLLGATHGLIFLPVLL). The Cytoplasmic segment spans residues 1248–1277 (SYIGPSVNKAKRHTTYERYRGTERERLLNF). The tract at residues 1274 to 1277 (LLNF) is required for location in lysosomes. A Di-leucine motif motif is present at residues 1274–1277 (LLNF).

Belongs to the patched family. As to quaternary structure, interacts (via the second lumenal domain) with NPC2. Interacts with TMEM97; the interaction may decrease NPC1 availability to the cell. Interacts with TIM1. Interacts with SLC38A9; this interaction inhibits cholesterol-mediated mTORC1 activation via its sterol transport activity. Post-translationally, N-glycosylated. As to expression, detected in liver (at protein level). Ubiquitous. Detected in adult heart, spleen, lung, liver, skeletal muscle, kidney, testis.

The protein localises to the late endosome membrane. It is found in the lysosome membrane. It carries out the reaction cholesterol(in) = cholesterol(out). Its function is as follows. Intracellular cholesterol transporter which acts in concert with NPC2 and plays an important role in the egress of cholesterol from the endosomal/lysosomal compartment. Unesterified cholesterol that has been released from LDLs in the lumen of the late endosomes/lysosomes is transferred by NPC2 to the cholesterol-binding pocket in the N-terminal domain of NPC1. Cholesterol binds to NPC1 with the hydroxyl group buried in the binding pocket. May play a role in vesicular trafficking in glia, a process that may be crucial for maintaining the structural and functional integrity of nerve terminals. Inhibits cholesterol-mediated mTORC1 activation throught its interaction with SLC38A9. In Mus musculus (Mouse), this protein is NPC intracellular cholesterol transporter 1.